Reading from the N-terminus, the 67-residue chain is MPGVYLNDDEYNFDIALRRFKKQVEKAGVLSEMKKRQHYEKPSVMRKKKKAAARKRLLKKIRKMNMA.

This sequence belongs to the bacterial ribosomal protein bS21 family.

This is Small ribosomal subunit protein bS21 from Nitratidesulfovibrio vulgaris (strain DSM 19637 / Miyazaki F) (Desulfovibrio vulgaris).